We begin with the raw amino-acid sequence, 121 residues long: Small ribosomal subunit protein uS13 (121 aa).

A disordered region spans residues 88–121; the sequence is GMRHRRGLPVRGQHTKNNARTRKGKAVAIANKKK.

It belongs to the universal ribosomal protein uS13 family. As to quaternary structure, part of the 30S ribosomal subunit. Forms a loose heterodimer with protein S19. Forms two bridges to the 50S subunit in the 70S ribosome.

Its function is as follows. Located at the top of the head of the 30S subunit, it contacts several helices of the 16S rRNA. In the 70S ribosome it contacts the 23S rRNA (bridge B1a) and protein L5 of the 50S subunit (bridge B1b), connecting the 2 subunits; these bridges are implicated in subunit movement. Contacts the tRNAs in the A and P-sites. The polypeptide is Small ribosomal subunit protein uS13 (Limosilactobacillus reuteri subsp. reuteri (strain JCM 1112) (Lactobacillus reuteri)).